Here is a 303-residue protein sequence, read N- to C-terminus: MEAYFATFRSPGPELLKVGFFTLRWYGLLIAFAVLIGLNLSNKLASIKGLSKNLINDLLPILVISSIIGARAYYVIFEWRNYSGSNFWSSIQAFGLTISIPTFIKVWQGGIAIHGALLAGTIAILIFCRLKQEDFWDVLDVLIPSVALGQAIGRWGNFFNNEAFGLPTDLPWKLFIPYPYRPEFFLDNNYFHPTFLYESIWNILLFLCLISLIRLSIKGKLKLPSGSLSCVYAIIYSLGRVWIEGLRTDPLCLGGVPPFCIGGIRIAQLISTILFGLGLLGLFWIYQRKKKLPSLGIIGRKHQ.

Transmembrane regions (helical) follow at residues 18–38 (VGFF…LIGL), 58–78 (LLPI…VIFE), and 107–127 (WQGG…ILIF). R154 provides a ligand contact to a 1,2-diacyl-sn-glycero-3-phospho-(1'-sn-glycerol). 2 consecutive transmembrane segments (helical) span residues 193-213 (PTFL…ISLI) and 266-286 (IAQL…FWIY).

Belongs to the Lgt family.

The protein resides in the cell inner membrane. The enzyme catalyses L-cysteinyl-[prolipoprotein] + a 1,2-diacyl-sn-glycero-3-phospho-(1'-sn-glycerol) = an S-1,2-diacyl-sn-glyceryl-L-cysteinyl-[prolipoprotein] + sn-glycerol 1-phosphate + H(+). Its pathway is protein modification; lipoprotein biosynthesis (diacylglyceryl transfer). In terms of biological role, catalyzes the transfer of the diacylglyceryl group from phosphatidylglycerol to the sulfhydryl group of the N-terminal cysteine of a prolipoprotein, the first step in the formation of mature lipoproteins. This chain is Phosphatidylglycerol--prolipoprotein diacylglyceryl transferase, found in Prochlorococcus marinus (strain MIT 9211).